A 283-amino-acid chain; its full sequence is Coiled-coil domain-containing protein 107 (283 aa).

The signal sequence occupies residues 1–24; sequence MAGAVSLLGVVGLLLVSALSGVLG. The interval 30–62 is disordered; the sequence is DLRAHPGNAAHPGSGATEPRRRPPLKDQRERTR. Residues 47-62 are compositionally biased toward basic and acidic residues; the sequence is EPRRRPPLKDQRERTR. The helical transmembrane segment at 65-85 threads the bilayer; it reads SLPLGALYTAAVAAFVLYKCL. Residues 104-134 are a coiled coil; sequence LQSEQQLAQLTQQLAQTEQHLNNLMAQLDPL. 2 disordered regions span residues 164–207 and 258–283; these read KPDK…SRPL and AKGP…SLFS. The span at 176 to 187 shows a compositional bias: gly residues; sequence EGSGGESAGGGD.

It localises to the membrane. In Homo sapiens (Human), this protein is Coiled-coil domain-containing protein 107 (CCDC107).